Here is a 724-residue protein sequence, read N- to C-terminus: MVMKSSVEEEEGGWGLGIPEKMRNNANWVDVTQEFKGACKELKLGELLHDKLFGLFEAMSAIEMMDPKMDAGMIGNQVNRKVLNFDQAVKDEAIRVKDLSIPELIGIMDTCFCCLITWLEGHSLAQTVFTCLYVHNPDLIQDPALKAFALGILKICDIAREKVNKAAVFEEEDFQAMTYGFKMANNVTDLRVTGMLKDVEDELQRKVKSTRSRQGEQRDPEVELDHQQCLALFSRVKFTRLLLSALISFTKKETSAVSEAQKLMSQAADLLPAVHATIQYGIQSQNDTTKGDHPIMMGFEPLVNQRLLPPTFPRYAKIIKREEMVNYFSKLIERIKSVCEVINITNLHSILDFFCEFSEQSPCVLSRSLLQTTFLIDNKKVFGTHLMQDMIKDALRCFVSPPVLSSKCSLNNNHQAKDYIDSFVTHCTRPFCSLIQIHGHNRARQRDKLGHILEEFATLQDEAEKVDAALHGLLMKLEPQRQHLACLGTWILYHNLRIMIQYLLSGFELELYSMHEYYYIYWYLSEFLYAWLMSTLSRADSSQMAEERILEEQLKVRSSKKSKKKKKARPLSKEITMSQAYQNMCAGMYKTMIALDMDRKVRKPQFELDSEQVRYEHRFAPFNSVVTPPPVHYIQFKEMSDLKKYNPPPRSADLYMAASKHFQQAKLLLENVTSPDAEVNRILKVAKPNIVVMKLLAGGHKKETKALPEFDFSAHKYFPIVKIL.

Belongs to the MAK10 family. As to quaternary structure, component of the N-terminal acetyltransferase C (NatC) complex.

It is found in the cytoplasm. Auxillary component of the N-terminal acetyltransferase C (NatC) complex which catalyzes acetylation of N-terminal methionine residues. N-terminal acetylation protects proteins from ubiquitination and degradation by the N-end rule pathway. Regulates cell proliferation during embryonic development. This is N-alpha-acetyltransferase 35, NatC auxiliary subunit (naa35) from Danio rerio (Zebrafish).